The chain runs to 129 residues: Glycine cleavage system H protein (129 aa).

The Lipoyl-binding domain maps to 24–106 (SYTVGISEHA…FGDGWFFRVM (83 aa)). K65 carries the N6-lipoyllysine modification.

It belongs to the GcvH family. As to quaternary structure, the glycine cleavage system is composed of four proteins: P, T, L and H. The cofactor is (R)-lipoate.

Its function is as follows. The glycine cleavage system catalyzes the degradation of glycine. The H protein shuttles the methylamine group of glycine from the P protein to the T protein. In Shewanella halifaxensis (strain HAW-EB4), this protein is Glycine cleavage system H protein.